A 260-amino-acid chain; its full sequence is Putative serine protease 45 (260 aa).

Positions 1–234 (MTRHWPWEVS…YTKWIKKQMS (234 aa)) constitute a Peptidase S1 domain. Cysteine 19 and cysteine 35 are oxidised to a cystine. The active-site Charge relay system is the histidine 34. N-linked (GlcNAc...) asparagine glycosylation is present at asparagine 55. Aspartate 82 functions as the Charge relay system in the catalytic mechanism. Disulfide bonds link cysteine 116–cysteine 192, cysteine 151–cysteine 173, and cysteine 182–cysteine 210. The active-site Charge relay system is serine 186.

Belongs to the peptidase S1 family.

This chain is Putative serine protease 45, found in Homo sapiens (Human).